A 334-amino-acid chain; its full sequence is rRNA 2'-O-methyltransferase fibrillarin (334 aa).

Gly residues predominate over residues 1-93 (MEGRGGSRGG…GGKPAAGGKP (93 aa)). A disordered region spans residues 1-94 (MEGRGGSRGG…GKPAAGGKPG (94 aa)). Residues 184 to 185 (TT), 203 to 204 (EL), 228 to 229 (DA), and 248 to 251 (DVAQ) each bind S-adenosyl-L-methionine.

It belongs to the methyltransferase superfamily. Fibrillarin family. Component of box C/D small nucleolar ribonucleoprotein (snoRNP) particles. It is associated with the U3, U8 and U13 small nuclear RNAs. Part of the small subunit (SSU) processome, composed of more than 70 proteins and the RNA chaperone small nucleolar RNA (snoRNA) U3. In terms of processing, by homology to other fibrillarins, some or all of the N-terminal domain arginines are modified to asymmetric dimethylarginine (DMA).

It is found in the nucleus. Its subcellular location is the nucleolus. It catalyses the reaction L-glutaminyl-[histone H2A] + S-adenosyl-L-methionine = N(5)-methyl-L-glutaminyl-[histone H2A] + S-adenosyl-L-homocysteine + H(+). In terms of biological role, S-adenosyl-L-methionine-dependent methyltransferase that has the ability to methylate both RNAs and proteins. Involved in pre-rRNA processing. Utilizes the methyl donor S-adenosyl-L-methionine to catalyze the site-specific 2'-hydroxyl methylation of ribose moieties in pre-ribosomal RNA. Site specificity is provided by a guide RNA that base pairs with the substrate. Methylation occurs at a characteristic distance from the sequence involved in base pairing with the guide RNA. Also acts as a protein methyltransferase by mediating methylation of 'Gln-105' of histone H2A (H2AQ105me), a modification that impairs binding of the FACT complex and is specifically present at 35S ribosomal DNA locus. Part of the small subunit (SSU) processome, first precursor of the small eukaryotic ribosomal subunit. During the assembly of the SSU processome in the nucleolus, many ribosome biogenesis factors, an RNA chaperone and ribosomal proteins associate with the nascent pre-rRNA and work in concert to generate RNA folding, modifications, rearrangements and cleavage as well as targeted degradation of pre-ribosomal RNA by the RNA exosome. The sequence is that of rRNA 2'-O-methyltransferase fibrillarin (fbl) from Dictyostelium discoideum (Social amoeba).